The chain runs to 192 residues: MPVAKKYFEIRWHGRAGQGAKSASQMLAEAALEAGKYVQAFPEYGAERTGAPMRAFNRIGDEYIRVRSAVENPDVVVVIDETLLSPAIVEGLSEDGILLVNTVKDFEFVRKKTGFNGKICVVDATDIALQEIKRGIPNTPMLGALVRVTGIVPLEAIEKRIEKMFGKKFPQEVIDANKRALRRGYEEVKCSE.

In terms of assembly, heterotetramer of one alpha, one beta, one delta and one gamma chain.

It carries out the reaction 2 oxidized [2Fe-2S]-[ferredoxin] + pyruvate + CoA = 2 reduced [2Fe-2S]-[ferredoxin] + acetyl-CoA + CO2 + H(+). The protein is Pyruvate synthase subunit PorC (porC) of Thermotoga maritima (strain ATCC 43589 / DSM 3109 / JCM 10099 / NBRC 100826 / MSB8).